We begin with the raw amino-acid sequence, 761 residues long: Isocyanide synthase xanB (761 aa).

The disordered stretch occupies residues 24–128 (LLGSYETKAP…GKGTKADPSH (105 aa)). A compositionally biased stretch (low complexity) spans 36–48 (ETSEIAASSSSSE). Residues 93 to 102 (TVSTPQSSDN) show a composition bias toward polar residues. Positions 115–126 (FKDEGKGTKADP) are enriched in basic and acidic residues.

The protein belongs to the isocyanide synthase family.

It functions in the pathway secondary metabolite biosynthesis. Functionally, isocyanide synthase; part of the gene cluster that mediates the biosynthesis of the isocyanide xanthocillin and its derivatives. The first step of the pathway consists in the conversion of tyrosine into a vinyl-isonitrile intermediate by the isocyanide synthase xanB. Subsequent oxidative dimerization of this intermediate to form xanthocillin may involve the cytochrome P450 monooxygenase xanG, whose expression is coregulated with that of XanB. Xanthocillin can be further modified by the isonitrile hydratase-like protein xanA which introduces N-formyl groups and the methyltransferase xanE which introduces methyl groups, leading to the production of several derivatives including fumiformamide. Finally, fumiformamide can be subject to both oxidative and reductive cyclization to yield melanocins E and F, respectively. This Aspergillus fumigatus (strain ATCC MYA-4609 / CBS 101355 / FGSC A1100 / Af293) (Neosartorya fumigata) protein is Isocyanide synthase xanB.